A 255-amino-acid polypeptide reads, in one-letter code: Pyridoxine 5'-phosphate synthase (255 aa).

2 residues coordinate 3-amino-2-oxopropyl phosphate: Asn-8 and Arg-19. The active-site Proton acceptor is the His-44. 1-deoxy-D-xylulose 5-phosphate is bound by residues Arg-46 and His-51. The active-site Proton acceptor is the Glu-74. Thr-111 lines the 1-deoxy-D-xylulose 5-phosphate pocket. His-202 acts as the Proton donor in catalysis. 3-amino-2-oxopropyl phosphate contacts are provided by residues Asp-203 and 225 to 226 (GH).

Belongs to the PNP synthase family. In terms of assembly, homooctamer; tetramer of dimers.

It is found in the cytoplasm. It catalyses the reaction 3-amino-2-oxopropyl phosphate + 1-deoxy-D-xylulose 5-phosphate = pyridoxine 5'-phosphate + phosphate + 2 H2O + H(+). The protein operates within cofactor biosynthesis; pyridoxine 5'-phosphate biosynthesis; pyridoxine 5'-phosphate from D-erythrose 4-phosphate: step 5/5. Its function is as follows. Catalyzes the complicated ring closure reaction between the two acyclic compounds 1-deoxy-D-xylulose-5-phosphate (DXP) and 3-amino-2-oxopropyl phosphate (1-amino-acetone-3-phosphate or AAP) to form pyridoxine 5'-phosphate (PNP) and inorganic phosphate. In Xanthomonas oryzae pv. oryzae (strain PXO99A), this protein is Pyridoxine 5'-phosphate synthase.